A 166-amino-acid chain; its full sequence is Large ribosomal subunit protein uL10 (166 aa).

The protein belongs to the universal ribosomal protein uL10 family. In terms of assembly, part of the ribosomal stalk of the 50S ribosomal subunit. The N-terminus interacts with L11 and the large rRNA to form the base of the stalk. The C-terminus forms an elongated spine to which L12 dimers bind in a sequential fashion forming a multimeric L10(L12)X complex.

Its function is as follows. Forms part of the ribosomal stalk, playing a central role in the interaction of the ribosome with GTP-bound translation factors. The chain is Large ribosomal subunit protein uL10 from Pseudomonas fluorescens (strain ATCC BAA-477 / NRRL B-23932 / Pf-5).